A 135-amino-acid polypeptide reads, in one-letter code: Ribonuclease P protein component (135 aa).

This sequence belongs to the RnpA family. In terms of assembly, consists of a catalytic RNA component (M1 or rnpB) and a protein subunit.

It carries out the reaction Endonucleolytic cleavage of RNA, removing 5'-extranucleotides from tRNA precursor.. Its function is as follows. RNaseP catalyzes the removal of the 5'-leader sequence from pre-tRNA to produce the mature 5'-terminus. It can also cleave other RNA substrates such as 4.5S RNA. The protein component plays an auxiliary but essential role in vivo by binding to the 5'-leader sequence and broadening the substrate specificity of the ribozyme. The chain is Ribonuclease P protein component from Pseudomonas aeruginosa (strain LESB58).